A 394-amino-acid chain; its full sequence is Elongation factor Tu (394 aa).

Residues 10 to 204 (KPHINIGTIG…AVDDNIPTPE (195 aa)) enclose the tr-type G domain. Residues 19–26 (GHVDHGKT) are G1. A GTP-binding site is contributed by 19–26 (GHVDHGKT). Residue Thr-26 participates in Mg(2+) binding. Residues 60-64 (GITIN) form a G2 region. A G3 region spans residues 81–84 (DCPG). GTP-binding positions include 81–85 (DCPGH) and 136–139 (NKID). The segment at 136–139 (NKID) is G4. The interval 174–176 (SAL) is G5.

The protein belongs to the TRAFAC class translation factor GTPase superfamily. Classic translation factor GTPase family. EF-Tu/EF-1A subfamily. In terms of assembly, monomer.

The protein localises to the cytoplasm. It carries out the reaction GTP + H2O = GDP + phosphate + H(+). GTP hydrolase that promotes the GTP-dependent binding of aminoacyl-tRNA to the A-site of ribosomes during protein biosynthesis. This Chlamydia abortus (strain DSM 27085 / S26/3) (Chlamydophila abortus) protein is Elongation factor Tu.